The chain runs to 212 residues: SOSS complex subunit B1 (212 aa).

The segment at residues 22-92 (IVLETGRVTK…TLYTGRGGDL (71 aa)) is a DNA-binding region (OB). Residues 110–212 (EPNPEYNTQQ…GKETRRSSKR (103 aa)) form a disordered region. Over residues 114-130 (EYNTQQAPNKSVQNNDN) the composition is skewed to polar residues. A Phosphothreonine; by ATM modification is found at T117. Residues 131–148 (SPTAPQATTGPPAASPAS) show a composition bias toward low complexity. Positions 149–160 (ENQNGNGLSTQL) are enriched in polar residues. A compositionally biased stretch (low complexity) spans 166-178 (PHPSHTPSHPPST).

Belongs to the SOSS-B family. SOSS-B1 subfamily. Component of the SOSS complex, composed of SOSS-B (SOSS-B1/NABP2 or SOSS-B2/NABP1), SOSS-A/INTS3 and SOSS-C/INIP. SOSS complexes containing SOSS-B1/NABP2 are more abundant than complexes containing SOSS-B2/NABP1. Directly interacts with ATM, SOSS-A/INTS3 and RAD51. Interacts with INTS7. Phosphorylated by ATM in response to DNA damage. Phosphorylation prevents degradation by the proteasome, hence stabilization of the protein and accumulation within cells. Post-translationally, ubiquitinated in a FBXL5-dependent manner, leading to proteasomal degradation.

It is found in the nucleus. Component of the SOSS complex, a multiprotein complex that functions downstream of the MRN complex to promote DNA repair and G2/M checkpoint. In the SOSS complex, acts as a sensor of single-stranded DNA that binds to single-stranded DNA, in particular to polypyrimidines. The SOSS complex associates with DNA lesions and influences diverse endpoints in the cellular DNA damage response including cell-cycle checkpoint activation, recombinational repair and maintenance of genomic stability. Required for efficient homologous recombination-dependent repair of double-strand breaks (DSBs) and ATM-dependent signaling pathways. In Mus musculus (Mouse), this protein is SOSS complex subunit B1 (Nabp2).